A 477-amino-acid polypeptide reads, in one-letter code: Stromelysin-3 (477 aa).

A signal peptide spans 1-17 (MHLLILLPALCVLGAHS). Residues 18-85 (APLSYTYLQH…SSSGRNRQKR (68 aa)) constitute a propeptide, activation peptide. The interval 64–83 (RCGVPDIPAPPDSSSGRNRQ) is disordered. The Zn(2+) site is built by C65, H152, and D154. Residues D159, G160, G162, and I164 each contribute to the Ca(2+) site. Zn(2+) contacts are provided by H167, H180, and H203. Residue E204 is part of the active site. Positions 207 and 213 each coordinate Zn(2+). C279 and C466 are disulfide-bonded. Hemopexin repeat units follow at residues 280–324 (KTNF…WRGI), 325–369 (PDTV…GISV), 370–418 (TQIQ…WRGV), and 419–466 (PKGI…FFNC).

This sequence belongs to the peptidase M10A family. Ca(2+) is required as a cofactor. Requires Zn(2+) as cofactor. In terms of tissue distribution, expressed in fibroblast cells that are activated by thyroid hormone. High levels in resorbing tail.

It is found in the secreted. Its subcellular location is the extracellular space. The protein localises to the extracellular matrix. Its function is as follows. May be involved in the modification of the extracellular matrix during metamorphic apoptosis. This Xenopus laevis (African clawed frog) protein is Stromelysin-3 (mmp11).